The sequence spans 203 residues: Imidazoleglycerol-phosphate dehydratase (203 aa).

It belongs to the imidazoleglycerol-phosphate dehydratase family.

It is found in the cytoplasm. It catalyses the reaction D-erythro-1-(imidazol-4-yl)glycerol 3-phosphate = 3-(imidazol-4-yl)-2-oxopropyl phosphate + H2O. Its pathway is amino-acid biosynthesis; L-histidine biosynthesis; L-histidine from 5-phospho-alpha-D-ribose 1-diphosphate: step 6/9. The chain is Imidazoleglycerol-phosphate dehydratase from Salinispora tropica (strain ATCC BAA-916 / DSM 44818 / JCM 13857 / NBRC 105044 / CNB-440).